A 390-amino-acid polypeptide reads, in one-letter code: GTPase Obg (390 aa).

An Obg domain is found at 1–159 (MKFVDEASIL…RDLLLELMLL (159 aa)). A disordered region spans residues 127-147 (NTRFKSSVNRTPRQKTNGTPG). Polar residues predominate over residues 129–145 (RFKSSVNRTPRQKTNGT). Positions 160 to 333 (ADVGMLGMPN…LCWDVMTFII (174 aa)) constitute an OBG-type G domain. GTP contacts are provided by residues 166 to 173 (GMPNAGKS), 191 to 195 (FTTLV), 213 to 216 (DIPG), 283 to 286 (NKID), and 314 to 316 (SAA). Positions 173 and 193 each coordinate Mg(2+).

The protein belongs to the TRAFAC class OBG-HflX-like GTPase superfamily. OBG GTPase family. As to quaternary structure, monomer. Requires Mg(2+) as cofactor.

Its subcellular location is the cytoplasm. Its function is as follows. An essential GTPase which binds GTP, GDP and possibly (p)ppGpp with moderate affinity, with high nucleotide exchange rates and a fairly low GTP hydrolysis rate. Plays a role in control of the cell cycle, stress response, ribosome biogenesis and in those bacteria that undergo differentiation, in morphogenesis control. This Salmonella gallinarum (strain 287/91 / NCTC 13346) protein is GTPase Obg.